We begin with the raw amino-acid sequence, 286 residues long: Nucleotide-binding protein HAPS_0087 (286 aa).

8 to 15 is an ATP binding site; that stretch reads GRSGSGKS. Residue 56-59 coordinates GTP; that stretch reads DVRN.

This sequence belongs to the RapZ-like family.

Displays ATPase and GTPase activities. This Glaesserella parasuis serovar 5 (strain SH0165) (Haemophilus parasuis) protein is Nucleotide-binding protein HAPS_0087.